Reading from the N-terminus, the 353-residue chain is Guanine nucleotide-binding protein subunit alpha (353 aa).

Positions 1–26 are disordered; it reads MGCGMSTEEKEGKARNEEIENQLKRD. Gly2 carries N-myristoyl glycine lipidation. The S-palmitoyl cysteine moiety is linked to residue Cys3. A compositionally biased stretch (basic and acidic residues) spans 7–26; that stretch reads TEEKEGKARNEEIENQLKRD. In terms of domain architecture, G-alpha spans 32 to 353; that stretch reads NEIKMLLLGA…QENLRLCGLI (322 aa). The G1 motif stretch occupies residues 35-48; the sequence is KMLLLGAGESGKST. GTP-binding residues include Glu43, Ser44, Gly45, Lys46, Ser47, Thr48, Asp150, Leu175, Thr181, Gly203, Asn269, Lys270, Asp272, and Ala325. Ser47 serves as a coordination point for Mg(2+). Residues 173 to 181 form a G2 motif region; sequence DVLRSRVKT. Thr181 is a binding site for Mg(2+). Residues 196–205 are G3 motif; the sequence is YRMFDVGGQR. A G4 motif region spans residues 265 to 272; that stretch reads ILFLNKID. Residues 323-328 form a G5 motif region; it reads TCATDT.

This sequence belongs to the G-alpha family. G(q) subfamily. In terms of assembly, g proteins are composed of 3 units; alpha, beta and gamma. The alpha chain contains the guanine nucleotide binding site. Mg(2+) is required as a cofactor.

Functionally, guanine nucleotide-binding proteins (G proteins) are involved as modulators or transducers in various transmembrane signaling systems. The polypeptide is Guanine nucleotide-binding protein subunit alpha (Cryphonectria parasitica (Chestnut blight fungus)).